Here is a 66-residue protein sequence, read N- to C-terminus: Large ribosomal subunit protein bL33c (66 aa).

Belongs to the bacterial ribosomal protein bL33 family.

Its subcellular location is the plastid. It localises to the chloroplast. The chain is Large ribosomal subunit protein bL33c from Drimys granadensis.